A 495-amino-acid polypeptide reads, in one-letter code: Cobyric acid synthase (495 aa).

Residues 252 to 440 enclose the GATase cobBQ-type domain; the sequence is RPKVVVLAYP…VHGLFADDGL (189 aa). Cys-334 acts as the Nucleophile in catalysis. Residue His-432 is part of the active site.

The protein belongs to the CobB/CobQ family. CobQ subfamily.

The protein operates within cofactor biosynthesis; adenosylcobalamin biosynthesis. Catalyzes amidations at positions B, D, E, and G on adenosylcobyrinic A,C-diamide. NH(2) groups are provided by glutamine, and one molecule of ATP is hydrogenolyzed for each amidation. The protein is Cobyric acid synthase of Bradyrhizobium sp. (strain ORS 278).